The following is a 314-amino-acid chain: Homoserine O-succinyltransferase (314 aa).

Catalysis depends on cysteine 142, which acts as the Acyl-thioester intermediate. The substrate site is built by lysine 163 and serine 192. Residue histidine 235 is the Proton acceptor of the active site. Residue glutamate 237 is part of the active site. Residue arginine 249 coordinates substrate.

Belongs to the MetA family.

The protein localises to the cytoplasm. The catalysed reaction is L-homoserine + succinyl-CoA = O-succinyl-L-homoserine + CoA. It functions in the pathway amino-acid biosynthesis; L-methionine biosynthesis via de novo pathway; O-succinyl-L-homoserine from L-homoserine: step 1/1. Transfers a succinyl group from succinyl-CoA to L-homoserine, forming succinyl-L-homoserine. This chain is Homoserine O-succinyltransferase, found in Shewanella sediminis (strain HAW-EB3).